The chain runs to 317 residues: Flagellar hook-associated protein 3 (317 aa).

This sequence belongs to the bacterial flagellin family.

The protein localises to the secreted. Its subcellular location is the bacterial flagellum. In Salmonella typhimurium (strain LT2 / SGSC1412 / ATCC 700720), this protein is Flagellar hook-associated protein 3 (flgL).